A 302-amino-acid polypeptide reads, in one-letter code: Sulfotransferase 1C4 (302 aa).

A 3'-phosphoadenylyl sulfate-binding site is contributed by 55 to 60 (KAGTTW). 113–115 (KTH) provides a ligand contact to substrate. The active-site Proton acceptor is H115. 3'-phosphoadenylyl sulfate is bound by residues R137, S145, Y200, 234–239 (TSFDVM), and 262–266 (FMRKG).

It belongs to the sulfotransferase 1 family. In terms of tissue distribution, expressed in liver, kidney and jejunum.

Its subcellular location is the cytoplasm. The protein localises to the cytosol. It catalyses the reaction a phenol + 3'-phosphoadenylyl sulfate = an aryl sulfate + adenosine 3',5'-bisphosphate + H(+). The enzyme catalyses 17beta-estradiol + 3'-phosphoadenylyl sulfate = 17beta-estradiol 3-sulfate + adenosine 3',5'-bisphosphate + H(+). The catalysed reaction is bisphenol A + 3'-phosphoadenylyl sulfate = bisphenyl A sulfate + adenosine 3',5'-bisphosphate + H(+). In terms of biological role, sulfotransferase that utilizes 3'-phospho-5'-adenylyl sulfate (PAPS) as sulfonate donor to catalyze the sulfate conjugation of phenolic compounds and estrogen (E2). Can also sulfonate estrogenic compounds, however, the dietary flavonoids (phytoestrogen) and environmental estrogens, like bisphenol A are better substrates than 17beta-estradiol (E2). This Macaca fascicularis (Crab-eating macaque) protein is Sulfotransferase 1C4 (SULT1C4).